Reading from the N-terminus, the 276-residue chain is NADPH-dependent 7-cyano-7-deazaguanine reductase (276 aa).

Residue 83–85 (IES) coordinates substrate. 85–86 (SK) provides a ligand contact to NADPH. The Thioimide intermediate role is filled by Cys184. Asp191 (proton donor) is an active-site residue. 223-224 (HE) is a substrate binding site. 252 to 253 (RG) is a binding site for NADPH.

It belongs to the GTP cyclohydrolase I family. QueF type 2 subfamily. As to quaternary structure, homodimer.

The protein localises to the cytoplasm. The catalysed reaction is 7-aminomethyl-7-carbaguanine + 2 NADP(+) = 7-cyano-7-deazaguanine + 2 NADPH + 3 H(+). Its pathway is tRNA modification; tRNA-queuosine biosynthesis. Functionally, catalyzes the NADPH-dependent reduction of 7-cyano-7-deazaguanine (preQ0) to 7-aminomethyl-7-deazaguanine (preQ1). The protein is NADPH-dependent 7-cyano-7-deazaguanine reductase of Ectopseudomonas mendocina (strain ymp) (Pseudomonas mendocina).